The chain runs to 259 residues: Putative hydro-lyase Bphyt_4813 (259 aa).

Belongs to the D-glutamate cyclase family.

The chain is Putative hydro-lyase Bphyt_4813 from Paraburkholderia phytofirmans (strain DSM 17436 / LMG 22146 / PsJN) (Burkholderia phytofirmans).